The sequence spans 186 residues: MHALSQEPTVWHGTTILTVRKGGRVVVGGDGQVSIGQTVIKSNARKVRKLGKGDVIGGFAGATADAFTLFERLESKLEQYPGQLTRAAVELAKDWRTDRYLRRLEAMMIVADKEVSLVLTGTGDVLEPEAGVMAIGSGGNYALAAARALIDTDKDAESIVRKSLDIAADICVYTNRNITIEALSAE.

Threonine 14 is an active-site residue. Residues alanine 168, cysteine 171, and threonine 174 each coordinate Na(+).

Belongs to the peptidase T1B family. HslV subfamily. In terms of assembly, a double ring-shaped homohexamer of HslV is capped on each side by a ring-shaped HslU homohexamer. The assembly of the HslU/HslV complex is dependent on binding of ATP.

The protein localises to the cytoplasm. The catalysed reaction is ATP-dependent cleavage of peptide bonds with broad specificity.. Its activity is regulated as follows. Allosterically activated by HslU binding. Functionally, protease subunit of a proteasome-like degradation complex believed to be a general protein degrading machinery. The chain is ATP-dependent protease subunit HslV from Bradyrhizobium sp. (strain ORS 278).